Here is a 221-residue protein sequence, read N- to C-terminus: Riboflavin kinase (221 aa).

The tract at residues 1–89 (MENIYIALKT…ISSILRFSQE (89 aa)) is H-T-H motif-like. The tract at residues 90 to 221 (LKLVGAVQDG…EVLASIDGKL (132 aa)) is riboflavin kinase. CDP is bound at residue 99 to 104 (GLGEGK). 2 residues coordinate Mg(2+): T128 and N130. Residues S185 and E192 each contribute to the FMN site. A CDP-binding site is contributed by 197-200 (KYLR).

The protein belongs to the archaeal riboflavin kinase family. Mg(2+) serves as cofactor.

The enzyme catalyses riboflavin + CTP = CDP + FMN + H(+). The protein operates within cofactor biosynthesis; FMN biosynthesis; FMN from riboflavin (CTP route): step 1/1. In terms of biological role, catalyzes the CTP-dependent phosphorylation of riboflavin (vitamin B2) to form flavin mononucleotide (FMN). The polypeptide is Riboflavin kinase (ribK) (Picrophilus torridus (strain ATCC 700027 / DSM 9790 / JCM 10055 / NBRC 100828 / KAW 2/3)).